The primary structure comprises 98 residues: Citrate lyase acyl carrier protein (98 aa).

The residue at position 14 (serine 14) is an O-(phosphoribosyl dephospho-coenzyme A)serine.

The protein belongs to the CitD family. In terms of assembly, oligomer with a subunit composition of (alpha,beta,gamma)6.

The protein localises to the cytoplasm. Its function is as follows. Covalent carrier of the coenzyme of citrate lyase. In Shigella boydii serotype 4 (strain Sb227), this protein is Citrate lyase acyl carrier protein.